Consider the following 122-residue polypeptide: Small ribosomal subunit protein uS13 (122 aa).

The tract at residues 95 to 122 is disordered; sequence GLPVRGQRTHTNARTRKGPAKPIAGKKK.

The protein belongs to the universal ribosomal protein uS13 family. In terms of assembly, part of the 30S ribosomal subunit. Forms a loose heterodimer with protein S19. Forms two bridges to the 50S subunit in the 70S ribosome.

Located at the top of the head of the 30S subunit, it contacts several helices of the 16S rRNA. In the 70S ribosome it contacts the 23S rRNA (bridge B1a) and protein L5 of the 50S subunit (bridge B1b), connecting the 2 subunits; these bridges are implicated in subunit movement. Contacts the tRNAs in the A and P-sites. In Caulobacter sp. (strain K31), this protein is Small ribosomal subunit protein uS13.